The sequence spans 156 residues: MSLLIDFIDETEEVKEEYVNLIREILGKAAQMEKIEDGAELSVTFVDNERIREINRDYRDKDQPTDVISFAMEEMGEGEMEIVGAEMPRMLGDLIISIPRAKEQAEEYGHSFDRELGFLALHGFLHLLGYDHMTEEDEKEMFGRQKEILEAFGLGR.

Residues His-122, His-126, and His-132 each coordinate Zn(2+).

This sequence belongs to the endoribonuclease YbeY family. Requires Zn(2+) as cofactor.

It is found in the cytoplasm. Single strand-specific metallo-endoribonuclease involved in late-stage 70S ribosome quality control and in maturation of the 3' terminus of the 16S rRNA. In Bacillus cereus (strain ATCC 10987 / NRS 248), this protein is Endoribonuclease YbeY.